The sequence spans 112 residues: M-myrmeciitoxin-Mp1 (112 aa).

The signal sequence occupies residues 1–26; it reads MKLSCLLLTLTIIFVLTIVHAPNVEA. The propeptide occupies 27–56; sequence KDLADPESEAVGFADAFGEADAVGEADPNA. Residues 57–78 form a critical for cytotoxic activity region; that stretch reads GLGSVFGRLARILGRVIPKVAK. The segment at 93-106 is igE-binding determinant; that stretch reads KEAIPMAVEMAKSQ.

The protein belongs to the formicidae venom precursor-01 superfamily. Ant pilosulin family. In terms of tissue distribution, expressed by the venom gland.

The protein localises to the secreted. Has strong cytotoxic and hemolytic activities. Is more potent against mononuclear leukocytes than against granulocytes. The synthesized peptide 57-76 shows a potent and broad spectrum antimicrobial activity against both Gram-positive and Gram-negative bacteria, and also against the fungus C.albicans. Adopts an alpha-helical structure. This chain is M-myrmeciitoxin-Mp1, found in Myrmecia pilosula (Jack jumper ant).